Reading from the N-terminus, the 564-residue chain is Dihydroxy-acid dehydratase (564 aa).

C50 is a [2Fe-2S] cluster binding site. D82 lines the Mg(2+) pocket. C123 provides a ligand contact to [2Fe-2S] cluster. Mg(2+) contacts are provided by D124 and K125. K125 carries the N6-carboxylysine modification. C195 contributes to the [2Fe-2S] cluster binding site. E447 provides a ligand contact to Mg(2+). S473 (proton acceptor) is an active-site residue.

This sequence belongs to the IlvD/Edd family. Homodimer. Requires [2Fe-2S] cluster as cofactor. Mg(2+) is required as a cofactor.

It carries out the reaction (2R)-2,3-dihydroxy-3-methylbutanoate = 3-methyl-2-oxobutanoate + H2O. The catalysed reaction is (2R,3R)-2,3-dihydroxy-3-methylpentanoate = (S)-3-methyl-2-oxopentanoate + H2O. It functions in the pathway amino-acid biosynthesis; L-isoleucine biosynthesis; L-isoleucine from 2-oxobutanoate: step 3/4. The protein operates within amino-acid biosynthesis; L-valine biosynthesis; L-valine from pyruvate: step 3/4. Functionally, functions in the biosynthesis of branched-chain amino acids. Catalyzes the dehydration of (2R,3R)-2,3-dihydroxy-3-methylpentanoate (2,3-dihydroxy-3-methylvalerate) into 2-oxo-3-methylpentanoate (2-oxo-3-methylvalerate) and of (2R)-2,3-dihydroxy-3-methylbutanoate (2,3-dihydroxyisovalerate) into 2-oxo-3-methylbutanoate (2-oxoisovalerate), the penultimate precursor to L-isoleucine and L-valine, respectively. This is Dihydroxy-acid dehydratase from Chloroflexus aggregans (strain MD-66 / DSM 9485).